Here is a 111-residue protein sequence, read N- to C-terminus: Beta-defensin 126 (111 aa).

Residues 1 to 20 (MKSLLFTLAVFMLLAQLVSG) form the signal peptide. The tract at residues 21–63 (NWYVKKCLNDVGICKKKCKPEEMHVKNGWAMCGKQRDCCVPAD) is in vitro binds to LPS, mediates antimicrobial activity and inhibits LPS-mediated inflammation. Cystine bridges form between Cys-27–Cys-58, Cys-34–Cys-52, and Cys-38–Cys-59.

The protein belongs to the beta-defensin family. Homodimer or homooligomer; disulfide-linked. In terms of processing, O-glycosylated; glycans contain alpha(2,3)-linked sialic acids.

The protein localises to the secreted. Functionally, highly glycosylated atypical beta-defensin involved in several aspects of sperm function. Facilitates sperm transport in the female reproductive tract and contributes to sperm protection against immunodetection; both functions are probably implicating the negative surface charge provided by its O-linked oligosaccharides in the sperm glycocalyx. Involved in binding of sperm to oviductal epithelial cells to form a sperm reservoir until ovulation. Release from the sperm surface during capacitation and ovaluation by an elevation of oviductal fluid pH is unmasking other surface components and allows sperm to penetrate the cumulus matrix and bind to the zona pellucida of the oocyte. In vitro has antimicrobial activity and may inhibit LPS-mediated inflammation. This chain is Beta-defensin 126 (DEFB126), found in Gorilla gorilla gorilla (Western lowland gorilla).